Reading from the N-terminus, the 190-residue chain is Cypemycin cysteine dehydrogenase (decarboxylating) (190 aa).

It belongs to the HFCD (homooligomeric flavin containing Cys decarboxylase) superfamily.

The enzyme catalyses [cypemycin](1-18)-L-Cys-L-Leu-L-Val-L-Cys + A = C(3,19),S(21)-[cypemycin](1-18)-L-Ala-L-Leu-N-thioethenyl-L-valinamide + hydrogen sulfide + AH2 + CO2. Its function is as follows. Involved in the biosynthesis of the lanaridin cypemycin. In Streptomyces sp, this protein is Cypemycin cysteine dehydrogenase (decarboxylating).